We begin with the raw amino-acid sequence, 142 residues long: Large ribosomal subunit protein uL13 (142 aa).

The protein belongs to the universal ribosomal protein uL13 family. Part of the 50S ribosomal subunit.

Functionally, this protein is one of the early assembly proteins of the 50S ribosomal subunit, although it is not seen to bind rRNA by itself. It is important during the early stages of 50S assembly. This is Large ribosomal subunit protein uL13 from Alkaliphilus metalliredigens (strain QYMF).